The chain runs to 142 residues: FAD synthase (142 aa).

Residues 9-10 (TF), 14-17 (HPGH), Asp92, and Tyr119 contribute to the ATP site.

Belongs to the archaeal FAD synthase family. Homodimer. Requires a divalent metal cation as cofactor.

It carries out the reaction FMN + ATP + H(+) = FAD + diphosphate. Its pathway is cofactor biosynthesis; FAD biosynthesis; FAD from FMN: step 1/1. Catalyzes the transfer of the AMP portion of ATP to flavin mononucleotide (FMN) to produce flavin adenine dinucleotide (FAD) coenzyme. This Halorhabdus utahensis (strain DSM 12940 / JCM 11049 / AX-2) protein is FAD synthase.